We begin with the raw amino-acid sequence, 365 residues long: Flagellin 1 (365 aa).

This sequence belongs to the bacterial flagellin family.

The protein localises to the secreted. Its subcellular location is the bacterial flagellum. In terms of biological role, flagellin is the subunit protein which polymerizes to form the filaments of bacterial flagella. The protein is Flagellin 1 (fliC1) of Proteus mirabilis.